Reading from the N-terminus, the 141-residue chain is Ubiquitin-like protein ATG12 (141 aa).

A disordered region spans residues 1 to 53 (MSEDSEVVLQLPSAPVGAGGESLPELSPETATPEPPSSAAVSPGTEEPPGDTK). The segment covering 23-40 (LPELSPETATPEPPSSAA) has biased composition (low complexity). Gly141 participates in a covalent cross-link: Glycyl lysine isopeptide (Gly-Lys) (interchain with K-? in acceptor protein).

The protein belongs to the ATG12 family. In terms of assembly, forms a conjugate with ATG5. Part of the minor complex composed of 4 sets of ATG12-ATG5 and ATG16L1 (400 kDa); this complex interacts with ATG3 leading to disruption of ATG7 interaction and promotion of ATG8-like proteins lipidation. Forms an 800-kDa complex composed of ATG12-ATG5 and ATG16L2. Interacts with DHX58/RIG-1, IFIH1/MDA5 and MAVS/IPS-1 in monomeric form as well as in ATG12-ATG5 conjugate. The interaction with MAVS is further enhanced upon vesicular stomatitis virus (VSV) infection. Interacts with ATG3; this interaction is essential for phosphatidylethanolamine (PE)-conjugated ATG8-like proteins formation. Interacts with ATG7. Interacts with ATG10. The ATG12-ATG5 conjugate interacts with RAB33A; this interaction is bridged by ATG16L1 and promotes ATG12-ATG5-ATG16L1 complex recruitment to phagophores. Interacts with TECPR1. Interacts with SH3BGRL. The ATG12-ATG5 conjugate interacts with PDCD6IP (via the BRO1 domain); this interaction is bridged by ATG12 and promotes multiple PDCD6IP-mediated functions such as endolysosomal trafficking, macroautophagy and exosome biogenesis. Acetylated by EP300. Ubiquitous.

Its subcellular location is the cytoplasm. It is found in the preautophagosomal structure membrane. Functionally, ubiquitin-like protein involved in autophagy vesicles formation. Conjugation with ATG5 through a ubiquitin-like conjugating system involving also ATG7 as an E1-like activating enzyme and ATG10 as an E2-like conjugating enzyme, is essential for its function. The ATG12-ATG5 conjugate acts as an E3-like enzyme which is required for lipidation of ATG8 family proteins and their association to the vesicle membranes. As part of the ATG8 conjugation system with ATG5 and ATG16L1, required for recruitment of LRRK2 to stressed lysosomes and induction of LRRK2 kinase activity in response to lysosomal stress. (Microbial infection) May act as a proviral factor. In association with ATG5, negatively regulates the innate antiviral immune response by impairing the type I IFN production pathway upon vesicular stomatitis virus (VSV) infection. This is Ubiquitin-like protein ATG12 from Mus musculus (Mouse).